An 80-amino-acid chain; its full sequence is Histone H1.M6.1 (80 aa).

The tract at residues 1-80 is disordered; it reads MSDAAVPPKK…KAVKKAPKKK (80 aa). Basic residues predominate over residues 11-80; the sequence is ASPKKAAAKK…KAVKKAPKKK (70 aa).

It localises to the nucleus. The protein localises to the chromosome. This Trypanosoma cruzi protein is Histone H1.M6.1.